Here is a 265-residue protein sequence, read N- to C-terminus: tRNA pseudouridine synthase A (265 aa).

The active-site Nucleophile is D53. Position 111 (Y111) interacts with substrate.

It belongs to the tRNA pseudouridine synthase TruA family. Homodimer.

The catalysed reaction is uridine(38/39/40) in tRNA = pseudouridine(38/39/40) in tRNA. Functionally, formation of pseudouridine at positions 38, 39 and 40 in the anticodon stem and loop of transfer RNAs. The sequence is that of tRNA pseudouridine synthase A from Acinetobacter baumannii (strain AB307-0294).